The primary structure comprises 159 residues: Ecotin (159 aa).

The signal sequence occupies residues 1–22; the sequence is MRPTPMTAILALSLAAAAPAMA. Residues cysteine 68 and cysteine 105 are joined by a disulfide bond.

Belongs to the protease inhibitor I11 (ecotin) family. Homodimer.

Its subcellular location is the periplasm. Functionally, general inhibitor of family S1 serine proteases. This is Ecotin from Pseudomonas putida (strain ATCC 700007 / DSM 6899 / JCM 31910 / BCRC 17059 / LMG 24140 / F1).